The primary structure comprises 352 residues: MAARVPSGEARRSASGAPVRRQVTIVRIYLDGVYGIGKSTTGRVMASAASGGSPTLYFPEPMAYWRTLFEADVISGIYDTQNRKQQGDLAADDAASITAHYQSRFTTPYLILHDHTFGLFGGDSLQRGTRPDLTVVFDRHPVASAVCFPAARYLIGDMSMCALIAMVATLPREPQGGNIVVTTLNVDEHVRRLRTRARIGEQIDMKLIATLRNVYSMLANTSNFLRSGRVWRDGWGELPLSCETYKHRATQMDAFQERESPELSDTLFAMFKTPELLDDRGVILEVHAWALDALMLKLRNLSVFCADLSGTPRQCAATVESLIPLMSSTLSDSESASSLERAARTFNAEMGV.

32 to 39 (GVYGIGKS) is a binding site for ATP. The Proton acceptor role is filled by glutamate 60. 2 residues coordinate substrate: tyrosine 78 and glutamine 102. Arginine 192 provides a ligand contact to ATP. Substrate is bound at residue arginine 198.

The protein belongs to the herpesviridae thymidine kinase family. Homodimer.

The enzyme catalyses thymidine + ATP = dTMP + ADP + H(+). Its function is as follows. Catalyzes the transfer of the gamma-phospho group of ATP to thymidine to generate dTMP in the salvage pathway of pyrimidine synthesis. The dTMP serves as a substrate for DNA polymerase during viral DNA replication. Allows the virus to be reactivated and to grow in non-proliferative cells lacking a high concentration of phosphorylated nucleic acid precursors. The sequence is that of Thymidine kinase from Equus caballus (Horse).